Consider the following 349-residue polypeptide: MSKKKLSKGQQRRVSANHQRRLKHADSKVEWDDSQLSEPQEGVIISRFGMHADVEAPDGKLHRCNIRRTIHSLVTGDRVVWRAGNETLAGISGIVEAVHPRQSVLTRPDYYDGLKPIAANIDQIVIVSAILPELSLNIIDRYLVACETLEIEPLIVLNKIDLLDDEGRAFVEEVMDIYRALHYRVLMMSSHTQQGVAELEAALTGRVSIFAGQSGVGKSSLLNALLYPDDAQILVNDVSDASGLGQHTTTAARLYHFPHGGDVIDSPGVREFGLWHLEPEQVTRGFIEFRDYLGSCKFRDCKHDTDPGCAIRAALERGEIAPERFDNYHRILESMAQVKTRKSFSAPDN.

The segment covering 1 to 11 (MSKKKLSKGQQ) has biased composition (basic residues). Positions 1–35 (MSKKKLSKGQQRRVSANHQRRLKHADSKVEWDDSQ) are disordered. Positions 111 to 272 (YDGLKPIAAN…VIDSPGVREF (162 aa)) constitute a CP-type G domain. GTP contacts are provided by residues 158–161 (NKID) and 212–220 (GQSGVGKSS). The Zn(2+) site is built by Cys-296, Cys-301, His-303, and Cys-309.

Belongs to the TRAFAC class YlqF/YawG GTPase family. RsgA subfamily. As to quaternary structure, monomer. Associates with 30S ribosomal subunit, binds 16S rRNA. It depends on Zn(2+) as a cofactor.

It is found in the cytoplasm. One of several proteins that assist in the late maturation steps of the functional core of the 30S ribosomal subunit. Helps release RbfA from mature subunits. May play a role in the assembly of ribosomal proteins into the subunit. Circularly permuted GTPase that catalyzes slow GTP hydrolysis, GTPase activity is stimulated by the 30S ribosomal subunit. This Dickeya dadantii (strain 3937) (Erwinia chrysanthemi (strain 3937)) protein is Small ribosomal subunit biogenesis GTPase RsgA.